The sequence spans 133 residues: Peptide methionine sulfoxide reductase MsrB (133 aa).

Positions 8-130 (LDVWRELLSD…NSASLRLKPR (123 aa)) constitute a MsrB domain. 4 residues coordinate Zn(2+): C47, C50, C96, and C99. The active-site Nucleophile is the C119.

This sequence belongs to the MsrB Met sulfoxide reductase family. Requires Zn(2+) as cofactor.

The catalysed reaction is L-methionyl-[protein] + [thioredoxin]-disulfide + H2O = L-methionyl-(R)-S-oxide-[protein] + [thioredoxin]-dithiol. The protein is Peptide methionine sulfoxide reductase MsrB of Azotobacter vinelandii (strain DJ / ATCC BAA-1303).